Here is a 591-residue protein sequence, read N- to C-terminus: Zinc finger protein 48 (591 aa).

N-acetylmethionine is present on Met-1. Disordered stretches follow at residues 1-24 (MEAS…IKEE) and 55-80 (GLGK…GSND). 2 stretches are compositionally biased toward basic and acidic residues: residues 8 to 24 (EFEH…IKEE) and 55 to 65 (GLGKRQPRDPV). Ser-12 carries the phosphoserine modification. A Glycyl lysine isopeptide (Lys-Gly) (interchain with G-Cter in SUMO2) cross-link involves residue Lys-58. 2 consecutive C2H2-type zinc fingers follow at residues 83-105 (AVCG…QRTH) and 111-133 (YKCG…QRTH). Residues 131 to 160 (RTHTGEKAYRVRPPAPGPPKMPRSRIPAGE) form a disordered region. A Glycyl lysine isopeptide (Lys-Gly) (interchain with G-Cter in SUMO2) cross-link involves residue Lys-150. 2 C2H2-type zinc fingers span residues 163-185 (TICG…QRTH) and 191-213 (YKCG…QRTH). The segment at 206–241 (RIKHQRTHRGDQLPRPVVPRRQPSPAAPAAPHRPKA) is disordered. Residues 224–235 (PRRQPSPAAPAA) show a composition bias toward low complexity. A Glycyl lysine isopeptide (Lys-Gly) (interchain with G-Cter in SUMO2) cross-link involves residue Lys-240. 2 C2H2-type zinc fingers span residues 246-268 (YICT…QRSH) and 274-296 (FGCD…LRVH). A Glycyl lysine isopeptide (Lys-Gly) (interchain with G-Cter in SUMO2) cross-link involves residue Lys-300. 2 consecutive C2H2-type zinc fingers follow at residues 302–324 (YLCP…LRTH) and 330–352 (HACP…RLTH). The interval 372–429 (PPPPPLGTSPSLTPRSPSHSSDGPFGLPGLEPEPGGPQAGEPPPPLAGDKPHKCPECG) is disordered. The segment covering 379–404 (TSPSLTPRSPSHSSDGPFGLPGLEPE) has biased composition (low complexity). The C2H2-type 9 zinc finger occupies 423–445 (HKCPECGKGFRRSSDLVKHHRVH). A Glycyl lysine isopeptide (Lys-Gly) (interchain with G-Cter in SUMO2) cross-link involves residue Lys-449. The segment at 451–473 (YLCPECGKGFADSSARVKHLRTH) adopts a C2H2-type 10 zinc-finger fold. A disordered region spans residues 464–512 (SARVKHLRTHQGERTRPPPPPSTLLRPHNPPGSVPIVPQSRVQGRPSGP). Residues 480–496 (PPPPPSTLLRPHNPPGS) show a composition bias toward pro residues. 2 C2H2-type zinc fingers span residues 516–538 (HVCG…RRTH) and 544–566 (YKCA…QRGH). The interval 564–591 (RGHLALKPFGVGDGPPRPLKEESPAGLE) is disordered. Over residues 581–591 (PLKEESPAGLE) the composition is skewed to basic and acidic residues. Lys-583 is covalently cross-linked (Glycyl lysine isopeptide (Lys-Gly) (interchain with G-Cter in SUMO2)).

Belongs to the krueppel C2H2-type zinc-finger protein family.

The protein resides in the nucleus. Functionally, may be involved in transcriptional regulation. The sequence is that of Zinc finger protein 48 (Znf48) from Mus musculus (Mouse).